Consider the following 391-residue polypeptide: Terminal nucleotidyltransferase 5C (391 aa).

This sequence belongs to the TENT family. In terms of assembly, interacts with BCCIP and PABPC1; the interaction has no effect on TENT5C poly(A) polymerase function. Interacts with PLK4; this interaction leads to the TENT5C recruitment into the centrosome. As to expression, expressed by splenocytes, expression is increased in activated splenocytes.

It localises to the nucleus. The protein localises to the cytoplasm. It is found in the cytoskeleton. Its subcellular location is the microtubule organizing center. The protein resides in the centrosome. It catalyses the reaction RNA(n) + ATP = RNA(n)-3'-adenine ribonucleotide + diphosphate. Its function is as follows. Catalyzes the transfer of one adenosine molecule from an ATP to an mRNA poly(A) tail bearing a 3'-OH terminal group and enhances mRNA stability and gene expression. Can also elongate RNA oligos ending with uridine molecule, provided that the sequence is adenosine-rich. Mainly targets mRNAs encoding endoplasmic reticulum-targeted protein. This chain is Terminal nucleotidyltransferase 5C, found in Mus musculus (Mouse).